The following is a 141-amino-acid chain: Large ribosomal subunit protein uL16 (141 aa).

The protein belongs to the universal ribosomal protein uL16 family. As to quaternary structure, part of the 50S ribosomal subunit.

Functionally, binds 23S rRNA and is also seen to make contacts with the A and possibly P site tRNAs. The sequence is that of Large ribosomal subunit protein uL16 from Kosmotoga olearia (strain ATCC BAA-1733 / DSM 21960 / TBF 19.5.1).